Here is a 493-residue protein sequence, read N- to C-terminus: Acetylcholine receptor subunit beta (493 aa).

Positions 1–24 (MENVRRMALGLVVMMALALSGVGA) are cleaved as a signal peptide. Over 25–240 (SVMEDTLLSV…VTFYLIIQRK (216 aa)) the chain is Extracellular. The cysteines at positions 152 and 166 are disulfide-linked. The N-linked (GlcNAc...) asparagine glycan is linked to Asn-165. A run of 3 helical transmembrane segments spans residues 241–265 (PLFYIVYTIIPCILISILAILVFYL), 273–291 (MSLSISALLAVTVFLLLLA), and 307–328 (YLMFIMILVAFSVILSVVVLNL). The Cytoplasmic segment spans residues 329-461 (HHRSPNTHTM…WQYVAMVADR (133 aa)). The residue at position 379 (Tyr-379) is a Phosphotyrosine; by Tyr-kinases. A helical membrane pass occupies residues 462–480 (LFLYVFFVICSIGTFSIFL).

Belongs to the ligand-gated ion channel (TC 1.A.9) family. Acetylcholine receptor (TC 1.A.9.1) subfamily. Beta-1/CHRNB1 sub-subfamily. Pentamer of two alpha chains, and one each of the beta, delta, and gamma chains.

The protein resides in the postsynaptic cell membrane. Its subcellular location is the cell membrane. The enzyme catalyses K(+)(in) = K(+)(out). The catalysed reaction is Na(+)(in) = Na(+)(out). In terms of biological role, after binding acetylcholine, the AChR responds by an extensive change in conformation that affects all subunits and leads to opening of an ion-conducting channel across the plasma membrane. The protein is Acetylcholine receptor subunit beta (CHRNB1) of Tetronarce californica (Pacific electric ray).